Consider the following 212-residue polypeptide: Ribosome maturation factor RimM (212 aa).

One can recognise a PRC barrel domain in the interval 105-181 (EEEFYYADLI…IDSITAGLDN (77 aa)). The interval 181 to 212 (NAELSGEEDEAEGPESARGSRPRGPKSAGEPR) is disordered.

The protein belongs to the RimM family. Binds ribosomal protein uS19.

It localises to the cytoplasm. An accessory protein needed during the final step in the assembly of 30S ribosomal subunit, possibly for assembly of the head region. Essential for efficient processing of 16S rRNA. May be needed both before and after RbfA during the maturation of 16S rRNA. It has affinity for free ribosomal 30S subunits but not for 70S ribosomes. In Chelativorans sp. (strain BNC1), this protein is Ribosome maturation factor RimM.